Reading from the N-terminus, the 1112-residue chain is Electrogenic sodium bicarbonate cotransporter 4 (1112 aa).

Basic and acidic residues predominate over residues 1–13 (MKVEEKAGVKKLE). Disordered regions lie at residues 1 to 80 (MKVE…SSLG), 220 to 255 (KKPIHRSLADIGKSVSTTNRSSARSPSAGPTLHHST), and 439 to 469 (GRSGASAGGGGSGGGAGGSGAGGGGSGNEAE). Topologically, residues 1–513 (MKVEEKAGVK…DFYDGFHIQS (513 aa)) are cytoplasmic. Polar residues-rich tracts occupy residues 53-67 (QRVQWSLQPDKSQQD) and 233-244 (SVSTTNRSSARS). The span at 444–465 (SAGGGGSGGGAGGSGAGGGGSG) shows a compositional bias: gly residues. Residues 514 to 536 (ISAVLFIYLGCITNAITFGGLLG) form a helical membrane-spanning segment. The Extracellular segment spans residues 537 to 547 (DATDNYQGVME). The chain crosses the membrane as a helical span at residues 548–579 (SFLGTAMAGSLFCLFSGQPLIILSSTGPILIF). Topologically, residues 580–598 (EKLLFDFSKANGLDYMEFR) are cytoplasmic. A helical transmembrane segment spans residues 599 to 620 (LWIGLHSAIQCLILVATDASFI). Over 621–734 (IKYITRFTEE…LGSSCQFVPD (114 aa)) the chain is Extracellular. Residues 735–753 (LALMSFILFFGTYSMTLTL) traverse the membrane as a helical segment. Over 754–772 (KKFKFSRYFPTKVRTLVAD) the chain is Cytoplasmic. A helical transmembrane segment spans residues 773–792 (FSIVFSILLFCGIDACFGLQ). Residues 793 to 820 (TPKLHVPNVIKPTRPDRGWFVAPFGKNP) lie on the Extracellular side of the membrane. The chain crosses the membrane as a helical span at residues 821 to 839 (WWVYPASILPALLVTILIF). Residues 840 to 858 (MDQQITAVIVNRKENKLRK) are Cytoplasmic-facing. Residues 859–875 (AAGYHLDLFWVGILMAL) traverse the membrane as a helical segment. Residues 876–880 (CSFMG) are Extracellular-facing. The helical transmembrane segment at 881–900 (LPWYVAATVISIAHIDSLKM) threads the bilayer. At 901–920 (ETETSAPGEQPQFLGVREQR) the chain is on the cytoplasmic side. The chain crosses the membrane as a helical span at residues 921–940 (VTGVMVFILTGISVFLAPIL). The Extracellular portion of the chain corresponds to 941 to 945 (KYIPM). The chain crosses the membrane as a helical span at residues 946–966 (PVLYGVFLYMGVASLNGIQFW). Residues 967 to 992 (DRCKLFLMPAKHQPDHAFLRHVPLRR) are Cytoplasmic-facing. Residues 993-1010 (IHLFTLVQILCLALLWIL) traverse the membrane as a helical segment. Topologically, residues 1011–1015 (KSTMA) are extracellular. A helical membrane pass occupies residues 1016–1033 (AIIFPVMILGLIIVRRLL). Residues 1034 to 1112 (DLIFSQHDLA…KRSSSWSHSL (79 aa)) are Cytoplasmic-facing. Positions 1055-1074 (KESDRKKRRKEVHENTDKEP) are enriched in basic and acidic residues. The segment at 1055–1112 (KESDRKKRRKEVHENTDKEPQFLPPSVVKIPMEGIPSDPQNGIHCVGRKRSSSWSHSL) is disordered.

This sequence belongs to the anion exchanger (TC 2.A.31) family. As to expression, observed in hepatocytes and in the apical region of bile duct intrahepatic cholangiocytes of liver. Also observed in uroepithelium cells lining the outer pelvic wall of the kidney (at protein level). Highly expressed in colon, distal colon, liver, kidney and testis. Moderate expression in duodenum and stomach and weak expression in heart. In kidney, very weakly expressed in the inner medulla, but abundantly expressed in cortex and outer medulla in the medullary thick ascending and cortical thick ascending limbs of the loop of Henle.

Its subcellular location is the basolateral cell membrane. The protein localises to the apical cell membrane. It catalyses the reaction 2 hydrogencarbonate(out) + Na(+)(out) = 2 hydrogencarbonate(in) + Na(+)(in). The enzyme catalyses 3 hydrogencarbonate(out) + Na(+)(out) = 3 hydrogencarbonate(in) + Na(+)(in). Its function is as follows. Mediates sodium- and bicarbonate-dependent electrogenic sodium bicarbonate cotransport, with a Na(+):HCO3(-) stoichiometry varying from 1:2 to 1:3. The chain is Electrogenic sodium bicarbonate cotransporter 4 from Rattus norvegicus (Rat).